Here is a 385-residue protein sequence, read N- to C-terminus: Glucose-fructose oxidoreductase domain-containing protein 2 (385 aa).

Residues 1–25 (MKLLPGVGVFGTGSSARVLVPLLRA) form the signal peptide.

It belongs to the Gfo/Idh/MocA family.

It is found in the secreted. It localises to the extracellular space. The protein resides in the extracellular matrix. In terms of biological role, promotes matrix assembly. The chain is Glucose-fructose oxidoreductase domain-containing protein 2 (Gfod2) from Mus musculus (Mouse).